A 202-amino-acid chain; its full sequence is Matrix protein (202 aa).

Residues 1-33 are disordered; it reads MNILRKIVKNRKDEDTQKPSPASAPPDDDDLWL. Residues 35–38 carry the PPXY motif motif; it reads PPEY. The interval 115 to 151 is essential for glycoprotein binding; that stretch reads KLRRTLIFQWADSRGPLEGEELEHSQEITWDDDTEFV.

The protein belongs to the lyssavirus matrix protein family. Homomultimer. Interacts with nucleoprotein and with the cytoplasmic domain of glycoprotein. Interacts with host ATP6V1A; this interaction plays an important role in virion uncoating after viral entry.

The protein resides in the virion membrane. It localises to the host endomembrane system. It is found in the host cytoplasm. Functionally, plays a major role in assembly, budding and uncoating of virion after membrane fusion. Completely covers the ribonucleoprotein coil and keep it in condensed bullet-shaped form. Inhibits viral transcription and stimulates replication. Plays a major role in early induction of TRAIL-mediated apoptosis in infected neurons. Inhibits the integrated stress response (ISR) in the infected cell by blocking the formation of stress granules. The polypeptide is Matrix protein (M) (Homo sapiens (Human)).